The primary structure comprises 887 residues: Alanine--tRNA ligase (887 aa).

Residues His573, His577, Cys676, and His680 each coordinate Zn(2+).

This sequence belongs to the class-II aminoacyl-tRNA synthetase family. The cofactor is Zn(2+).

The protein resides in the cytoplasm. It carries out the reaction tRNA(Ala) + L-alanine + ATP = L-alanyl-tRNA(Ala) + AMP + diphosphate. In terms of biological role, catalyzes the attachment of alanine to tRNA(Ala) in a two-step reaction: alanine is first activated by ATP to form Ala-AMP and then transferred to the acceptor end of tRNA(Ala). Also edits incorrectly charged Ser-tRNA(Ala) and Gly-tRNA(Ala) via its editing domain. This chain is Alanine--tRNA ligase, found in Corynebacterium jeikeium (strain K411).